Consider the following 664-residue polypeptide: UvrABC system protein C (664 aa).

Positions 63–141 constitute a GIY-YIG domain; that stretch reads LRPGVYRMYD…IKRYRPPYNI (79 aa). The UVR domain maps to 254–289; that stretch reads THVQKKLVTAMEQASNDLNYELAAVYRDRLKALAFI.

This sequence belongs to the UvrC family. Interacts with UvrB in an incision complex.

It localises to the cytoplasm. In terms of biological role, the UvrABC repair system catalyzes the recognition and processing of DNA lesions. UvrC both incises the 5' and 3' sides of the lesion. The N-terminal half is responsible for the 3' incision and the C-terminal half is responsible for the 5' incision. The sequence is that of UvrABC system protein C from Zymomonas mobilis subsp. mobilis (strain ATCC 31821 / ZM4 / CP4).